The sequence spans 592 residues: BTB/POZ domain-containing protein At5g03250 (592 aa).

The BTB domain maps to 28-98 (SDVTIEVGDM…CYGVKIELTA (71 aa)). An NPH3 domain is found at 217-502 (DWWFDDASFL…VQVLFFEQLR (286 aa)). Position 443 is a phosphotyrosine (Tyr443).

This sequence belongs to the NPH3 family.

It participates in protein modification; protein ubiquitination. May act as a substrate-specific adapter of an E3 ubiquitin-protein ligase complex (CUL3-RBX1-BTB) which mediates the ubiquitination and subsequent proteasomal degradation of target proteins. In Arabidopsis thaliana (Mouse-ear cress), this protein is BTB/POZ domain-containing protein At5g03250.